A 276-amino-acid polypeptide reads, in one-letter code: MASETENLRAIALDPSHPTPTDVGEIYDETSDSLTDMLGGYIHVGYWEDPSKQETAEVVGDRLTREVGVRLSPAQGEHILDVGCGTGKSTAQLAGIYDAQVTGITISKQQVEVARSQYGRKMPAGQVHFQFADAMDLPFGDASFDGAYAIESLVHMLDKRTALAQIAQVLRPGSRLVIADLVSDHPCPDSPVLARYAEIFEPPLVSADDLQNLLRQAGFKVIDVTDIRENIRPSCKLFETKGLSLGGELGQKLLEIASILEEMNELGYALITAERL.

Residues Gln110, 133-134 (DA), and His155 contribute to the S-adenosyl-L-methionine site.

This sequence belongs to the methyltransferase superfamily. The cofactor is S-adenosyl-L-methionine.

The protein operates within alkaloid biosynthesis. Functionally, O-methyltransferase; part of the gene cluster that mediates the biosynthesis of communesins, a prominent class of indole alkaloids with great potential as pharmaceuticals. Communesins are biosynthesized by the coupling of tryptamine and aurantioclavine, two building blocks derived from L-tryptophan. The L-tryptophan decarboxylase cnsB converts L-tryptophan to tryptamine, whereas the tryptophan dimethylallyltransferase cnsF converts L-tryptophan to 4-dimethylallyl tryptophan which is further transformed to aurantioclavine by the aurantioclavine synthase cnsA, probably aided by the catalase cnsD. The cytochrome P450 monooxygenase cnsC catalyzes the heterodimeric coupling between the two different indole moieties, tryptamine and aurantioclavine, to construct vicinal quaternary stereocenters and yield the heptacyclic communesin scaffold. The O-methyltransferase cnsE then methylates the communesin scaffold to produce communesin K, the simplest characterized communesin that contains the heptacyclic core. The dioxygenase cnsJ converts communesin K into communesin I. Acylation to introduce the hexadienyl group at position N16 of communesin I by the acyltransferase cnsK leads to the production of communesin B. The hexadienyl group is produced by the highly reducing polyketide synthase cnsI, before being hydrolytically removed from cnsI by the serine hydrolase cnsH, converted into hexadienyl-CoA by the CoA ligase cnsG, and then transferred to communesin I by cnsK. Surprisingly, cnsK may also be a promiscuous acyltransferase that can tolerate a range of acyl groups, including acetyl-, propionyl-, and butyryl-CoA, which lead to communesins A, G and H respectively. The roles of the alpha-ketoglutarate-dependent dioxygenases cnsM and cnsP have still to be determined. This Penicillium expansum (Blue mold rot fungus) protein is O-methyltransferase cnsE.